A 387-amino-acid chain; its full sequence is S-adenosylmethionine synthase (387 aa).

An ATP-binding site is contributed by H16. Mg(2+) is bound at residue D18. E44 provides a ligand contact to K(+). E57 and Q100 together coordinate L-methionine. Residues 100–110 (QSPDIAQGVDR) form a flexible loop region. ATP contacts are provided by residues 167–169 (DAK), 232–233 (RF), D241, 247–248 (RK), A264, and K268. Residue D241 participates in L-methionine binding. K272 contributes to the L-methionine binding site.

This sequence belongs to the AdoMet synthase family. Homotetramer; dimer of dimers. Mg(2+) is required as a cofactor. K(+) serves as cofactor.

It localises to the cytoplasm. It catalyses the reaction L-methionine + ATP + H2O = S-adenosyl-L-methionine + phosphate + diphosphate. The protein operates within amino-acid biosynthesis; S-adenosyl-L-methionine biosynthesis; S-adenosyl-L-methionine from L-methionine: step 1/1. Catalyzes the formation of S-adenosylmethionine (AdoMet) from methionine and ATP. The overall synthetic reaction is composed of two sequential steps, AdoMet formation and the subsequent tripolyphosphate hydrolysis which occurs prior to release of AdoMet from the enzyme. The sequence is that of S-adenosylmethionine synthase from Cupriavidus metallidurans (strain ATCC 43123 / DSM 2839 / NBRC 102507 / CH34) (Ralstonia metallidurans).